A 321-amino-acid chain; its full sequence is Malate dehydrogenase (321 aa).

Residues 10-15 and D34 each bind NAD(+); that span reads GSGMIG. Positions 83 and 89 each coordinate substrate. NAD(+) is bound by residues N96 and 119–121; that span reads ITN. N121 and R152 together coordinate substrate. The active-site Proton acceptor is the H176.

This sequence belongs to the LDH/MDH superfamily. MDH type 3 family.

It carries out the reaction (S)-malate + NAD(+) = oxaloacetate + NADH + H(+). In terms of biological role, catalyzes the reversible oxidation of malate to oxaloacetate. The polypeptide is Malate dehydrogenase (Sinorhizobium fredii (strain NBRC 101917 / NGR234)).